The primary structure comprises 345 residues: Putative pyridoxal reductase (345 aa).

Catalysis depends on Tyr-60, which acts as the Proton donor.

The protein belongs to the aldo/keto reductase family.

It localises to the cytoplasm. The protein localises to the nucleus. The enzyme catalyses pyridoxine + NADP(+) = pyridoxal + NADPH + H(+). It participates in cofactor degradation; B6 vitamer degradation; pyridoxal from pyridoxine (dehydrogenase route): step 1/1. Functionally, catalyzes the reduction of pyridoxal (PL) with NADPH and oxidation of pyridoxine (PN) with NADP(+). The sequence is that of Putative pyridoxal reductase from Saccharomyces cerevisiae (strain ATCC 204508 / S288c) (Baker's yeast).